The sequence spans 323 residues: THO complex subunit 6 homolog (323 aa).

6 WD repeats span residues leucine 6–alanine 45, alanine 58–alanine 96, leucine 108–valine 147, glycine 150–cysteine 189, arginine 200–valine 238, and cysteine 279–leucine 321.

This sequence belongs to the WD repeat THOC6 family. As to quaternary structure, component of the THO subcomplex, which is composed of thoc1, thoc2, thoc3, thoc5, thoc6 and thoc7. Component of the transcription/export (TREX) complex at least composed of alyref/thoc4, ddx39b, sarnp/cip29, chtop and the THO subcomplex.

The protein resides in the nucleus. It localises to the nucleus speckle. Component of the THO subcomplex of the TREX complex which is thought to couple mRNA transcription, processing and nuclear export, and which specifically associates with spliced mRNA and not with unspliced pre-mRNA. Plays a key structural role in the oligomerization of the THO-DDX39B complex. TREX is recruited to spliced mRNAs by a transcription-independent mechanism, binds to mRNA upstream of the exon-junction complex (EJC) and is recruited in a splicing- and cap-dependent manner to a region near the 5' end of the mRNA where it functions in mRNA export to the cytoplasm via the TAP/NXF1 pathway. Plays a role in apoptosis negative control involved in brain development. This chain is THO complex subunit 6 homolog (thoc6), found in Danio rerio (Zebrafish).